Reading from the N-terminus, the 421-residue chain is Mannose-1-phosphate guanyltransferase alpha-A (421 aa).

This sequence belongs to the transferase hexapeptide repeat family.

It catalyses the reaction alpha-D-mannose 1-phosphate + GTP + H(+) = GDP-alpha-D-mannose + diphosphate. The protein operates within nucleotide-sugar biosynthesis; GDP-alpha-D-mannose biosynthesis; GDP-alpha-D-mannose from alpha-D-mannose 1-phosphate (GTP route): step 1/1. The protein is Mannose-1-phosphate guanyltransferase alpha-A (gmppa-a) of Xenopus laevis (African clawed frog).